Here is a 749-residue protein sequence, read N- to C-terminus: Cytosolic phospholipase A2 (749 aa).

Residues 1 to 178 (MSFIDPYQHI…MKKLLGPKNS (178 aa)) are phospholipid binding. The residue at position 2 (serine 2) is a Phosphoserine. The C2 domain occupies 6-122 (PYQHIIVEHH…KVGEKKQVPF (117 aa)). Residues aspartate 40, threonine 41, aspartate 43, asparagine 65, aspartate 93, alanine 94, and asparagine 95 each contribute to the Ca(2+) site. The region spanning 140–740 (SSPDLRFSMA…SSVEARRFFN (601 aa)) is the PLA2c domain. Serine 228 functions as the Nucleophile in the catalytic mechanism. Position 268 is a phosphothreonine (threonine 268). Positions 426–458 (AKHIVSNDSSDSDDESQGPKGTEHEEAEREYQN) are disordered. Residues serine 434, serine 435, and serine 437 each carry the phosphoserine modification. Positions 446–457 (GTEHEEAEREYQ) are enriched in basic and acidic residues. Serine 505 carries the phosphoserine; by MAPK modification. Position 515 is a phosphoserine (serine 515). Lysine 541 is covalently cross-linked (Glycyl lysine isopeptide (Lys-Gly) (interchain with G-Cter in SUMO2)). Residue aspartate 549 is the Proton acceptor of the active site. A Glycyl lysine isopeptide (Lys-Gly) (interchain with G-Cter in SUMO2) cross-link involves residue lysine 606. Serine 727 and serine 729 each carry phosphoserine.

As to quaternary structure, interacts with KAT5. Phosphorylated at both Ser-505 and Ser-727 in response to mitogenic stimuli. Detected in granulosa cells after stimulation with chorionic gonadotropin (at protein level).

It localises to the cytoplasm. The protein resides in the golgi apparatus membrane. The protein localises to the nucleus envelope. It catalyses the reaction a 1,2-diacyl-sn-glycero-3-phosphocholine + H2O = a 1-acyl-sn-glycero-3-phosphocholine + a fatty acid + H(+). The enzyme catalyses a 1-O-alkyl-2-acyl-sn-glycero-3-phosphocholine + H2O = a 1-O-alkyl-sn-glycero-3-phosphocholine + a fatty acid + H(+). The catalysed reaction is a 1-acyl-sn-glycero-3-phosphocholine + H2O = sn-glycerol 3-phosphocholine + a fatty acid + H(+). It carries out the reaction 1-hexadecanoyl-2-(5Z,8Z,11Z,14Z-eicosatetraenoyl)-sn-glycero-3-phosphocholine + H2O = 1-hexadecanoyl-sn-glycero-3-phosphocholine + (5Z,8Z,11Z,14Z)-eicosatetraenoate + H(+). It catalyses the reaction 1,2-di-(5Z,8Z,11Z,14Z-eicosatetraenoyl)-sn-glycero-3-phosphocholine + H2O = 1-(5Z,8Z,11Z,14Z-eicosatetraenoyl)-sn-glycero-3-phosphocholine + (5Z,8Z,11Z,14Z)-eicosatetraenoate + H(+). The enzyme catalyses 1-octadecanoyl-2-(5Z,8Z,11Z,14Z-eicosatetraenoyl)-sn-glycero-3-phosphocholine + H2O = 1-octadecanoyl-sn-glycero-3-phosphocholine + (5Z,8Z,11Z,14Z)-eicosatetraenoate + H(+). The catalysed reaction is 1-hexadecanoyl-2-(9Z,12Z-octadecadienoyl)-sn-glycero-3-phosphocholine + H2O = (9Z,12Z)-octadecadienoate + 1-hexadecanoyl-sn-glycero-3-phosphocholine + H(+). It carries out the reaction 1-octadecanoyl-2-(9Z,12Z,15Z-octadecatrienoyl)-sn-glycero-3-phosphocholine + H2O = (9Z,12Z,15Z)-octadecatrienoate + 1-octadecanoyl-sn-glycero-3-phosphocholine + H(+). It catalyses the reaction 1-(5Z,8Z,11Z,14Z-eicosatetraenoyl)-2-hexadecanoyl-sn-glycero-3-phosphocholine + H2O = 1-(5Z,8Z,11Z,14Z-eicosatetraenoyl)-sn-glycero-3-phosphocholine + hexadecanoate + H(+). The enzyme catalyses 1-O-hexadecyl-2-(5Z,8Z,11Z,14Z)-eicosatetraenoyl-sn-glycero-3-phosphocholine + H2O = 1-O-hexadecyl-sn-glycero-3-phosphocholine + (5Z,8Z,11Z,14Z)-eicosatetraenoate + H(+). The catalysed reaction is 1,2-di-(9Z-octadecenoyl)-sn-glycero-3-phospho-(1'-sn-glycerol) + H2O = 1-(9Z-octadecenoyl)-sn-glycero-3-phospho-(1'-sn-glycerol) + (9Z)-octadecenoate + H(+). It carries out the reaction 1-octadecanoyl-2-(5Z,8Z,11Z,14Z-eicosatetraenoyl)-sn-glycero-3-phosphate + H2O = 1-octadecanoyl-sn-glycero-3-phosphate + (5Z,8Z,11Z,14Z)-eicosatetraenoate + H(+). It catalyses the reaction 1-hexadecanoyl-sn-glycero-3-phosphocholine + H2O = sn-glycerol 3-phosphocholine + hexadecanoate + H(+). The enzyme catalyses 2-(prostaglandin E2)-sn-glycero-3-phosphoethanolamine + H2O = sn-glycero-3-phosphoethanolamine + prostaglandin E2 + H(+). The catalysed reaction is 2-[(15S)-hydroxy-(5Z,8Z,11Z,13E)-eicosatetraenoyl]-sn-glycero-3-phosphocholine + H2O = (15S)-hydroxy-(5Z,8Z,11Z,13E)-eicosatetraenoate + sn-glycerol 3-phosphocholine + H(+). It carries out the reaction 2-[(15R)-hydroxy-(5Z,8Z,11Z,13E)-eicosatetraenoyl]-sn-glycero-3-phosphocholine + H2O = (15R)-hydroxy-(5Z,8Z,11Z,13E)-eicosatetraenoate + sn-glycerol 3-phosphocholine + H(+). It catalyses the reaction 2-(prostaglandin E2)-sn-glycero-3-phosphocholine + H2O = prostaglandin E2 + sn-glycerol 3-phosphocholine + H(+). The enzyme catalyses 2-[(11R)-hydroxy-(5Z,8Z,12E,14Z)-eicosatetraenoyl]-sn-glycero-3-phosphocholine + H2O = (11R)-hydroxy-(5Z,8Z,12E,14Z)-eicosatetraenoate + sn-glycerol 3-phosphocholine + H(+). The catalysed reaction is 1-(5Z,8Z,11Z,14Z-eicosatetraenoyl)-2-O-hexadecyl-sn-glycero-3-phosphocholine + H2O = 2-O-hexadecyl-sn-glycero-3-phosphocholine + (5Z,8Z,11Z,14Z)-eicosatetraenoate + H(+). It carries out the reaction 1-octadecanoyl-2-(5Z,8Z,11Z,14Z-eicosatetraenoyl)-sn-glycero-3-phosphocholine + glycerol = 1-(5Z,8Z,11Z,14Z-eicosatetraenoyl)-glycerol + 1-octadecanoyl-sn-glycero-3-phosphocholine. It catalyses the reaction 1-octadecanoyl-2-(9Z,12Z,15Z-octadecatrienoyl)-sn-glycero-3-phosphocholine + glycerol = 1-(9Z,12Z,15Z-octadecatrienoyl)-glycerol + 1-octadecanoyl-sn-glycero-3-phosphocholine. The protein operates within membrane lipid metabolism; glycerophospholipid metabolism. Its pathway is lipid metabolism; arachidonate metabolism. It functions in the pathway lipid metabolism; prostaglandin biosynthesis. It participates in lipid metabolism; leukotriene B4 biosynthesis. With respect to regulation, activated by cytosolic calcium, which is necessary for binding to membrane lipids. Activated by phosphorylation in response to mitogenic stimuli. Has primarily calcium-dependent phospholipase and lysophospholipase activities, with a major role in membrane lipid remodeling and biosynthesis of lipid mediators of the inflammatory response. Plays an important role in embryo implantation and parturition through its ability to trigger prostanoid production. Preferentially hydrolyzes the ester bond of the fatty acyl group attached at sn-2 position of phospholipids (phospholipase A2 activity). Selectively hydrolyzes sn-2 arachidonoyl group from membrane phospholipids, providing the precursor for eicosanoid biosynthesis via the cyclooxygenase pathway. In an alternative pathway of eicosanoid biosynthesis, hydrolyzes sn-2 fatty acyl chain of eicosanoid lysophopholipids to release free bioactive eicosanoids. Hydrolyzes the ester bond of the fatty acyl group attached at sn-1 position of phospholipids (phospholipase A1 activity) only if an ether linkage rather than an ester linkage is present at the sn-2 position. This hydrolysis is not stereospecific. Has calcium-independent phospholipase A2 and lysophospholipase activities in the presence of phosphoinositides. Has O-acyltransferase activity. Catalyzes the transfer of fatty acyl chains from phospholipids to a primary hydroxyl group of glycerol (sn-1 or sn-3), potentially contributing to monoacylglycerol synthesis. This is Cytosolic phospholipase A2 (PLA2G4A) from Bos taurus (Bovine).